A 189-amino-acid polypeptide reads, in one-letter code: UPF0301 protein RC0043 (189 aa).

This sequence belongs to the UPF0301 (AlgH) family.

This Rickettsia conorii (strain ATCC VR-613 / Malish 7) protein is UPF0301 protein RC0043.